The following is a 395-amino-acid chain: Multidrug resistance protein MdtL (395 aa).

Over 1-3 the chain is Cytoplasmic; that stretch reads MKR. A helical membrane pass occupies residues 4-24; sequence FLLCSFALVLLYPAGIDMYLV. The Periplasmic portion of the chain corresponds to 25–41; it reads GLPRIAADLNASEAQLH. Residues 42–62 form a helical membrane-spanning segment; it reads IAFSVYLAGMATAMLFAGKIA. Over 63–68 the chain is Cytoplasmic; that stretch reads DQSGRK. The helical transmembrane segment at 69 to 89 threads the bilayer; the sequence is PVAIVGAIVFMMASLLCSRAS. Topologically, residues 90-92 are periplasmic; sequence EGS. A helical transmembrane segment spans residues 93–113; it reads LFLSGRFLQGVGAGGCYVVAF. At 114 to 130 the chain is on the cytoplasmic side; the sequence is AILRDTLDEHRRAKVLS. Residues 131 to 151 traverse the membrane as a helical segment; the sequence is LLNGITCIVPVLAPVMGHLIM. Topologically, residues 152–157 are periplasmic; sequence LRFPWQ. Residues 158–178 traverse the membrane as a helical segment; that stretch reads SLFYTMSTMGIMVGLLSLFIL. Residues 179–216 lie on the Cytoplasmic side of the membrane; that stretch reads RETRPARLAPRDLSPSSSAAESLVNRFFVSRLAITTLS. The helical transmembrane segment at 217–237 threads the bilayer; that stretch reads VSVILTFVNASPVLLMEVMGF. Over 238-246 the chain is Periplasmic; sequence SRGDYAITM. A helical transmembrane segment spans residues 247-267; the sequence is ALTAGVSMVVSFSTPFALGLF. Topologically, residues 268–270 are cytoplasmic; sequence KPR. The helical transmembrane segment at 271–291 threads the bilayer; sequence TLMLVSQGLFLTAGVTLSLAH. Topologically, residues 292 to 294 are periplasmic; the sequence is TNT. The chain crosses the membrane as a helical span at residues 295–315; that stretch reads VTLFGLTLICAGFSVGFGVAM. Over 316–332 the chain is Cytoplasmic; sequence SQALGPFSLRAGVASST. Residues 333–353 traverse the membrane as a helical segment; sequence LGIAQVCGSSLWIWLAAILGI. Residues 354-357 lie on the Periplasmic side of the membrane; sequence SAMN. Residues 358–378 traverse the membrane as a helical segment; the sequence is MLIGILIGCSIVSILLIFSVA. The Cytoplasmic portion of the chain corresponds to 379-395; that stretch reads PNRSVAEHEEIPYQSRS.

This sequence belongs to the major facilitator superfamily. DHA1 family. MdtL (TC 2.A.1.2.22) subfamily.

The protein localises to the cell inner membrane. The protein is Multidrug resistance protein MdtL (mdtL) of Salmonella typhi.